We begin with the raw amino-acid sequence, 151 residues long: Ribosome maturation factor RimP (151 aa).

Belongs to the RimP family.

Its subcellular location is the cytoplasm. In terms of biological role, required for maturation of 30S ribosomal subunits. The sequence is that of Ribosome maturation factor RimP from Shewanella denitrificans (strain OS217 / ATCC BAA-1090 / DSM 15013).